We begin with the raw amino-acid sequence, 63 residues long: uncharacterized protein (63 aa).

An N-terminal signal peptide occupies residues 1–15 (MRNPVVWGMIYFAVG). Cys-16 is lipidated: N-palmitoyl cysteine. Cys-16 carries the S-diacylglycerol cysteine lipid modification. The helical transmembrane segment at 34 to 56 (SILLMVFAAYNISISFKMFAFSF) threads the bilayer.

The protein localises to the cell membrane. This is an uncharacterized protein from Bacillus subtilis (strain 168).